Reading from the N-terminus, the 158-residue chain is Interleukin-17A (158 aa).

Residues Met-1–Ala-25 form the signal peptide. An N-linked (GlcNAc...) asparagine glycan is attached at Asn-71. 2 cysteine pairs are disulfide-bonded: Cys-97–Cys-147 and Cys-102–Cys-149.

This sequence belongs to the IL-17 family. As to quaternary structure, homodimer. Forms complexes with IL17RA and IL17RC receptors with 2:1 binding stoichiometry: two receptor chains for one interleukin molecule. IL17A homodimer preferentially drives the formation of IL17RA-IL17RC heterodimeric receptor complex. IL17A homodimer adopts an asymmetrical ternary structure with one IL17RA molecule, allowing for high affinity interactions of one IL17A monomer with one IL17RA molecule (via D1 and D2 domains), while disfavoring binding of a second IL17RA molecule on the other IL17A monomer. Heterodimer with IL17F. IL17A-IL17F forms complexes with IL17RA-IL17RC, but with lower affinity when compared to IL17A homodimer. IL17RA and IL17RC chains cannot distinguish between IL17A and IL17F molecules, potentially enabling the formation of topologically distinct complexes. In terms of tissue distribution, expressed by Th17 cell lineage (at protein level). The expression pattern reflects the differentiation state, with IL17A-IL17F heterodimers produced at higher levels than IL17A-IL17A and IL17F-IL17F dimers in fully differentiated Th17 cells. Expressed in innate lymphoid cells (at protein level). Expressed in gamma-delta T cell subsets (at protein level). Expressed in iNKT cells (at protein level).

The protein resides in the secreted. Effector cytokine of innate and adaptive immune system involved in antimicrobial host defense and maintenance of tissue integrity. Signals via IL17RA-IL17RC heterodimeric receptor complex, triggering homotypic interaction of IL17RA and IL17RC chains with TRAF3IP2 adapter. This leads to downstream TRAF6-mediated activation of NF-kappa-B and MAPkinase pathways ultimately resulting in transcriptional activation of cytokines, chemokines, antimicrobial peptides and matrix metalloproteinases, with potential strong immune inflammation. Plays an important role in connecting T cell-mediated adaptive immunity and acute inflammatory response to destroy extracellular bacteria and fungi. As a signature effector cytokine of T-helper 17 cells (Th17), primarily induces neutrophil activation and recruitment at infection and inflammatory sites. In airway epithelium, mediates neutrophil chemotaxis via induction of CXCL1 and CXCL5 chemokines. In secondary lymphoid organs, contributes to germinal center formation by regulating the chemotactic response of B cells to CXCL12 and CXCL13, enhancing retention of B cells within the germinal centers, B cell somatic hypermutation rate and selection toward plasma cells. Effector cytokine of a subset of gamma-delta T cells that functions as part of an inflammatory circuit downstream IL1B, TLR2 and IL23A-IL12B to promote neutrophil recruitment for efficient bacterial clearance. Effector cytokine of innate immune cells including invariant natural killer cell (iNKT) and group 3 innate lymphoid cells that mediate initial neutrophilic inflammation. Involved in the maintenance of the integrity of epithelial barriers during homeostasis and pathogen infection. Upon acute injury, has a direct role in epithelial barrier formation by regulating OCLN localization and tight junction biogenesis. As part of the mucosal immune response induced by commensal bacteria, enhances host's ability to resist pathogenic bacterial and fungal infections by promoting neutrophil recruitment and antimicrobial peptides release. In synergy with IL17F, mediates the production of antimicrobial beta-defensins DEFB1, DEFB103A, and DEFB104A by mucosal epithelial cells, limiting the entry of microbes through the epithelial barriers. Involved in antiviral host defense through various mechanisms. Enhances immunity against West Nile virus by promoting T cell cytotoxicity. May play a beneficial role in influenza A virus (H5N1) infection by enhancing B cell recruitment and immune response in the lung. Contributes to influenza A virus (H1N1) clearance by driving the differentiation of B-1a B cells, providing for production of virus-specific IgM antibodies at first line of host defense. This Mus musculus (Mouse) protein is Interleukin-17A (Il17a).